Consider the following 242-residue polypeptide: 1-(5-phosphoribosyl)-5-[(5-phosphoribosylamino)methylideneamino] imidazole-4-carboxamide isomerase (242 aa).

Asp-8 serves as the catalytic Proton acceptor. The active-site Proton donor is the Asp-129.

This sequence belongs to the HisA/HisF family.

Its subcellular location is the cytoplasm. It carries out the reaction 1-(5-phospho-beta-D-ribosyl)-5-[(5-phospho-beta-D-ribosylamino)methylideneamino]imidazole-4-carboxamide = 5-[(5-phospho-1-deoxy-D-ribulos-1-ylimino)methylamino]-1-(5-phospho-beta-D-ribosyl)imidazole-4-carboxamide. Its pathway is amino-acid biosynthesis; L-histidine biosynthesis; L-histidine from 5-phospho-alpha-D-ribose 1-diphosphate: step 4/9. The polypeptide is 1-(5-phosphoribosyl)-5-[(5-phosphoribosylamino)methylideneamino] imidazole-4-carboxamide isomerase (Clostridium botulinum (strain ATCC 19397 / Type A)).